The following is a 228-amino-acid chain: GDT1-like protein 5 (228 aa).

N-acetylglycine is present on G2. 6 helical membrane-spanning segments follow: residues L12–A32, L39–G59, T71–F91, P133–G153, L173–G193, and I205–P225.

This sequence belongs to the GDT1 family.

Its subcellular location is the membrane. The polypeptide is GDT1-like protein 5 (Arabidopsis thaliana (Mouse-ear cress)).